The primary structure comprises 179 residues: Large ribosomal subunit protein uL5 (179 aa).

It belongs to the universal ribosomal protein uL5 family. Part of the 50S ribosomal subunit; part of the 5S rRNA/L5/L18/L25 subcomplex. Contacts the 5S rRNA and the P site tRNA. Forms a bridge to the 30S subunit in the 70S ribosome.

In terms of biological role, this is one of the proteins that bind and probably mediate the attachment of the 5S RNA into the large ribosomal subunit, where it forms part of the central protuberance. In the 70S ribosome it contacts protein S13 of the 30S subunit (bridge B1b), connecting the 2 subunits; this bridge is implicated in subunit movement. Contacts the P site tRNA; the 5S rRNA and some of its associated proteins might help stabilize positioning of ribosome-bound tRNAs. In Pseudomonas paraeruginosa (strain DSM 24068 / PA7) (Pseudomonas aeruginosa (strain PA7)), this protein is Large ribosomal subunit protein uL5.